The sequence spans 354 residues: Caffeate O-methyltransferase-like protein 2 (354 aa).

4 residues coordinate S-adenosyl-L-homocysteine: Gly198, Asp221, Met242, and Lys255. His259 acts as the Proton acceptor in catalysis. Catalysis depends on residues Glu287 and Glu319.

This sequence belongs to the class I-like SAM-binding methyltransferase superfamily. Cation-independent O-methyltransferase family. COMT subfamily.

The protein is Caffeate O-methyltransferase-like protein 2 of Oryza sativa subsp. japonica (Rice).